The sequence spans 339 residues: Glycerol-3-phosphate dehydrogenase [NAD(P)+] (339 aa).

4 residues coordinate NADPH: Ser15, Tyr16, His36, and Lys110. Residues Lys110, Gly139, and Thr141 each coordinate sn-glycerol 3-phosphate. NADPH is bound at residue Ala143. Sn-glycerol 3-phosphate contacts are provided by Lys195, Asp248, Ser258, Arg259, and Asn260. Lys195 (proton acceptor) is an active-site residue. Arg259 provides a ligand contact to NADPH. Residues Val283 and Glu285 each coordinate NADPH.

It belongs to the NAD-dependent glycerol-3-phosphate dehydrogenase family.

Its subcellular location is the cytoplasm. It carries out the reaction sn-glycerol 3-phosphate + NAD(+) = dihydroxyacetone phosphate + NADH + H(+). It catalyses the reaction sn-glycerol 3-phosphate + NADP(+) = dihydroxyacetone phosphate + NADPH + H(+). Its pathway is membrane lipid metabolism; glycerophospholipid metabolism. Its function is as follows. Catalyzes the reduction of the glycolytic intermediate dihydroxyacetone phosphate (DHAP) to sn-glycerol 3-phosphate (G3P), the key precursor for phospholipid synthesis. This Citrobacter koseri (strain ATCC BAA-895 / CDC 4225-83 / SGSC4696) protein is Glycerol-3-phosphate dehydrogenase [NAD(P)+].